We begin with the raw amino-acid sequence, 300 residues long: Estradiol 17-beta-dehydrogenase 11 (300 aa).

Positions 1–18 (MKILLDLLLLLPLLIVCC) are cleaved as a signal peptide. 40–67 (LITGAGHGIGRLTAYEFAKLKSKLVLWD) contacts NADP(+). Substrate is bound at residue serine 172. Tyrosine 185 acts as the Proton acceptor in catalysis. Lysine 189 provides a ligand contact to NADP(+).

It belongs to the short-chain dehydrogenases/reductases (SDR) family. 17-beta-HSD 3 subfamily.

The protein localises to the endoplasmic reticulum. The protein resides in the lipid droplet. The enzyme catalyses 17beta-estradiol + NAD(+) = estrone + NADH + H(+). It catalyses the reaction 17beta-estradiol + NADP(+) = estrone + NADPH + H(+). In terms of biological role, can convert androstan-3-alpha,17-beta-diol (3-alpha-diol) to androsterone in vitro, suggesting that it may participate in androgen metabolism during steroidogenesis. May act by metabolizing compounds that stimulate steroid synthesis and/or by generating metabolites that inhibit it. Has no activity toward DHEA (dehydroepiandrosterone), or A-dione (4-androste-3,17-dione), and only a slight activity toward testosterone to A-dione. The chain is Estradiol 17-beta-dehydrogenase 11 (HSD17B11) from Macaca fascicularis (Crab-eating macaque).